A 797-amino-acid polypeptide reads, in one-letter code: Short transient receptor potential channel 4-associated protein (797 aa).

At Ala2 the chain carries N-acetylalanine. Residues 2 to 400 (AAAPVAAGSG…VLYVLCVLLM (399 aa)) form an interaction with TNFRSF1A region.

As to quaternary structure, component of the DCX(TRPC4AP) E3 ubiquitin ligase complex, at least composed of CUL4A, DDB1, TRPC4AP/TRUSS and RBX1. Interacts with MYC. Constitutively associated with TNFRSF1A. Directly interacts with TRADD, TRAF2, CHUK, IKBKB and IKBKG. Interacts with TRPC1, TRPC4 and TRPC5. In terms of assembly, (Microbial infection) Interacts with Hepatitis B virus (HBV) protein X; leading to prevent ubiquitination of TRPC4AP by SKP2. Post-translationally, phosphorylated by GSK3B; phosphorylation is required for ubiquitination. Ubiquitinated by a SCF (SKP1-CUL1-F-box protein) E3 ubiquitin-protein ligase containing SKP2, leading to its degradation. Phosphorylation by GSK3B is required for ubiquitination.

It is found in the cytoplasm. Its subcellular location is the perinuclear region. Its pathway is protein modification; protein ubiquitination. Substrate-recognition component of a DCX (DDB1-CUL4-X-box) E3 ubiquitin-protein ligase complex required for cell cycle control. The DCX(TRPC4AP) complex specifically mediates the polyubiquitination and subsequent degradation of MYC as part of the DesCEND (destruction via C-end degrons) pathway. The DesCEND (destruction via C-end degrons) pathway recognizes a C-degron located at the extreme C terminus of target proteins, leading to their ubiquitination and degradation. The DCX(TRPC4AP) complex specifically recognizes proteins with an arginine at the minus 3 position (R-3 motif) at the C-terminus, such as MYC, leading to their ubiquitination and degradation. Also participates in the activation of NFKB1 in response to ligation of TNFRSF1A, possibly by linking TNFRSF1A to the IKK signalosome. Involved in JNK activation via its interaction with TRAF2. Also involved in elevation of endoplasmic reticulum Ca(2+) storage reduction in response to CHRM1. The chain is Short transient receptor potential channel 4-associated protein from Homo sapiens (Human).